The sequence spans 370 residues: Erythronate-4-phosphate dehydrogenase (370 aa).

Ser45 and Thr66 together coordinate substrate. The NAD(+) site is built by Asp142 and Thr169. Arg202 is an active-site residue. Asp228 contacts NAD(+). Residue Glu233 is part of the active site. The active-site Proton donor is His250. Gly253 provides a ligand contact to NAD(+). Tyr254 provides a ligand contact to substrate.

The protein belongs to the D-isomer specific 2-hydroxyacid dehydrogenase family. PdxB subfamily. Homodimer.

Its subcellular location is the cytoplasm. The catalysed reaction is 4-phospho-D-erythronate + NAD(+) = (R)-3-hydroxy-2-oxo-4-phosphooxybutanoate + NADH + H(+). The protein operates within cofactor biosynthesis; pyridoxine 5'-phosphate biosynthesis; pyridoxine 5'-phosphate from D-erythrose 4-phosphate: step 2/5. Its function is as follows. Catalyzes the oxidation of erythronate-4-phosphate to 3-hydroxy-2-oxo-4-phosphonooxybutanoate. This Teredinibacter turnerae (strain ATCC 39867 / T7901) protein is Erythronate-4-phosphate dehydrogenase.